A 400-amino-acid polypeptide reads, in one-letter code: Protein transport protein HofC homolog (400 aa).

Helical transmembrane passes span 165–185, 209–229, and 370–390; these read YPII…HFVL, LADF…LLAI, and LLII…LPIF.

Belongs to the GSP F family.

The protein resides in the cell inner membrane. The polypeptide is Protein transport protein HofC homolog (hofC) (Escherichia coli (strain K12)).